The primary structure comprises 238 residues: DNA repair protein RecO (238 aa).

The protein belongs to the RecO family.

Its function is as follows. Involved in DNA repair and RecF pathway recombination. This chain is DNA repair protein RecO, found in Aliivibrio fischeri (strain ATCC 700601 / ES114) (Vibrio fischeri).